The primary structure comprises 109 residues: Nucleoid-associated protein HI_0442 (109 aa).

It belongs to the YbaB/EbfC family. In terms of assembly, homodimer.

It is found in the cytoplasm. Its subcellular location is the nucleoid. Functionally, binds to DNA and alters its conformation. May be involved in regulation of gene expression, nucleoid organization and DNA protection. The sequence is that of Nucleoid-associated protein HI_0442 from Haemophilus influenzae (strain ATCC 51907 / DSM 11121 / KW20 / Rd).